Here is a 495-residue protein sequence, read N- to C-terminus: ATP synthase subunit beta, chloroplastic (495 aa).

172–179 is an ATP binding site; that stretch reads GGAGVGKT.

The protein belongs to the ATPase alpha/beta chains family. As to quaternary structure, F-type ATPases have 2 components, CF(1) - the catalytic core - and CF(0) - the membrane proton channel. CF(1) has five subunits: alpha(3), beta(3), gamma(1), delta(1), epsilon(1). CF(0) has four main subunits: a(1), b(1), b'(1) and c(9-12).

The protein resides in the plastid. It is found in the chloroplast thylakoid membrane. The catalysed reaction is ATP + H2O + 4 H(+)(in) = ADP + phosphate + 5 H(+)(out). Produces ATP from ADP in the presence of a proton gradient across the membrane. The catalytic sites are hosted primarily by the beta subunits. The chain is ATP synthase subunit beta, chloroplastic from Scilla siberica (Siberian squill).